The sequence spans 235 residues: Cell division protein FtsQ (235 aa).

The Cytoplasmic portion of the chain corresponds to 1–6 (MERLTR). The helical transmembrane segment at 7 to 25 (WLLVMMAMLLAASGLVWFY) threads the bilayer. Topologically, residues 26 to 235 (NSNHLPVKQV…DGLPEKESEE (210 aa)) are periplasmic. The region spanning 30-99 (LPVKQVSLKG…DTVEVVLTER (70 aa)) is the POTRA domain.

The protein belongs to the FtsQ/DivIB family. FtsQ subfamily. Part of a complex composed of FtsB, FtsL and FtsQ.

Its subcellular location is the cell inner membrane. In terms of biological role, essential cell division protein. May link together the upstream cell division proteins, which are predominantly cytoplasmic, with the downstream cell division proteins, which are predominantly periplasmic. May control correct divisome assembly. This Neisseria meningitidis serogroup B (strain ATCC BAA-335 / MC58) protein is Cell division protein FtsQ.